Here is an 88-residue protein sequence, read N- to C-terminus: Small ribosomal subunit protein bS20 (88 aa).

The protein belongs to the bacterial ribosomal protein bS20 family.

Binds directly to 16S ribosomal RNA. The chain is Small ribosomal subunit protein bS20 from Brucella abortus (strain S19).